A 214-amino-acid chain; its full sequence is Redox-sensing transcriptional repressor Rex (214 aa).

The H-T-H motif DNA-binding region spans 17-56 (LYYRIFKRFHADQVEKASSKQIADAMGIDSATVRRDFSYF). 91–96 (GCGNIG) provides a ligand contact to NAD(+).

The protein belongs to the transcriptional regulatory Rex family. As to quaternary structure, homodimer.

The protein localises to the cytoplasm. Its function is as follows. Modulates transcription in response to changes in cellular NADH/NAD(+) redox state. This chain is Redox-sensing transcriptional repressor Rex, found in Streptococcus pyogenes serotype M1.